Reading from the N-terminus, the 365-residue chain is Phospho-N-acetylmuramoyl-pentapeptide-transferase (365 aa).

Transmembrane regions (helical) follow at residues 22 to 42 (YISV…LALG), 74 to 94 (TMGG…WGDL), 95 to 115 (TSIY…IGFF), 133 to 153 (YKFA…FYLL), 168 to 188 (SLYI…IING), 201 to 221 (GLAI…AYIE), 240 to 260 (LAEV…FLWF), 267 to 287 (VFMG…IAVM), 292 to 312 (LIFF…MLQV), and 342 to 362 (KVVI…LAAI).

This sequence belongs to the glycosyltransferase 4 family. MraY subfamily. Mg(2+) is required as a cofactor.

The protein localises to the cell inner membrane. It carries out the reaction UDP-N-acetyl-alpha-D-muramoyl-L-alanyl-gamma-D-glutamyl-meso-2,6-diaminopimeloyl-D-alanyl-D-alanine + di-trans,octa-cis-undecaprenyl phosphate = di-trans,octa-cis-undecaprenyl diphospho-N-acetyl-alpha-D-muramoyl-L-alanyl-D-glutamyl-meso-2,6-diaminopimeloyl-D-alanyl-D-alanine + UMP. It functions in the pathway cell wall biogenesis; peptidoglycan biosynthesis. Functionally, catalyzes the initial step of the lipid cycle reactions in the biosynthesis of the cell wall peptidoglycan: transfers peptidoglycan precursor phospho-MurNAc-pentapeptide from UDP-MurNAc-pentapeptide onto the lipid carrier undecaprenyl phosphate, yielding undecaprenyl-pyrophosphoryl-MurNAc-pentapeptide, known as lipid I. This Francisella tularensis subsp. tularensis (strain FSC 198) protein is Phospho-N-acetylmuramoyl-pentapeptide-transferase.